A 176-amino-acid polypeptide reads, in one-letter code: Putative ribosomal protein eS10-like (176 aa).

Residues T104–Q176 form a disordered region. The segment covering S108–R139 has biased composition (basic and acidic residues).

The protein belongs to the eukaryotic ribosomal protein eS10 family.

The protein is Putative ribosomal protein eS10-like (RPS10P5) of Homo sapiens (Human).